Consider the following 429-residue polypeptide: Endoglucanase type C (429 aa).

The first 18 residues, 1–18 (MKSLSLILSALAVQVAVA), serve as a signal peptide directing secretion. At glutamine 19 the chain carries Pyrrolidone carboxylic acid. 9 disulfides stabilise this stretch: cysteine 36–cysteine 42, cysteine 66–cysteine 88, cysteine 78–cysteine 84, cysteine 156–cysteine 383, cysteine 190–cysteine 213, cysteine 194–cysteine 212, cysteine 233–cysteine 252, cysteine 241–cysteine 246, and cysteine 257–cysteine 333. Asparagine 74 carries N-linked (GlcNAc...) asparagine glycosylation. Glutamate 215 (nucleophile) is an active-site residue. Glutamate 220 acts as the Proton donor in catalysis. Asparagine 265 and asparagine 318 each carry an N-linked (GlcNAc...) asparagine glycan.

Belongs to the glycosyl hydrolase 7 (cellulase C) family.

It catalyses the reaction Endohydrolysis of (1-&gt;4)-beta-D-glucosidic linkages in cellulose, lichenin and cereal beta-D-glucans.. In Fusarium oxysporum (Fusarium vascular wilt), this protein is Endoglucanase type C.